A 394-amino-acid polypeptide reads, in one-letter code: Envelope glycoprotein D (394 aa).

An N-terminal signal peptide occupies residues 1–25 (MGGTAARLGAVILFVVIVGLHGVRG). Residues 25-57 (GKYALADASLKMADPNRFRGKDLPVLDQLTDPP) form an interaction with TNFRSF14 region. Topologically, residues 26–339 (KYALADASLK…PYHPPATPNN (314 aa)) are virion surface. Histidine 64 is a binding site for Zn(2+). Disulfide bonds link cysteine 91-cysteine 214, cysteine 131-cysteine 227, and cysteine 143-cysteine 152. Residues asparagine 119 and asparagine 146 are each glycosylated (N-linked (GlcNAc...) asparagine; by host). Aspartate 240 provides a ligand contact to Zn(2+). The profusion stretch occupies residues 261–305 (LKIAGWHGPKAPYTSTLLPPELSETPNATQPELAPEDPEDSALLE). Positions 275-301 (STLLPPELSETPNATQPELAPEDPEDS) are disordered. N-linked (GlcNAc...) asparagine; by host glycosylation occurs at asparagine 287. A helical transmembrane segment spans residues 340–364 (MGLIAGAVGGSLLAALVICGIVYWM). The Intravirion segment spans residues 365-394 (HRRTRKAPKRIRLPHIREDDQPSSHQPLFY).

The protein belongs to the herpesviridae glycoprotein D family. In terms of assembly, homodimer. Interacts with host receptor TNFRSF14. Interacts with host receptor NECTIN1. Interacts (via profusion domain) with gB; this interaction occurs in the absence of gH/gL. Interacts (via profusion domain) with gH/gL heterodimer; this interaction occurs in the absence of gB. Associates with the gB-gH/gL-gD complex. Interacts (via C-terminus) with UL11 tegument protein. Interacts with host RSAD2.

It is found in the virion membrane. It localises to the host Golgi apparatus. Functionally, envelope glycoprotein that binds to the host cell entry receptors NECTIN1, TNFRSF14/HVEM and 3-O-sulfated heparan sulfate, promoting the virus entry into host cells. May trigger fusion with host membrane, by recruiting the fusion machinery composed of gB and gH/gL. The chain is Envelope glycoprotein D (gD) from Human herpesvirus 1 (strain Patton) (HHV-1).